Here is a 676-residue protein sequence, read N- to C-terminus: MKKIYQWAVGQSFKKLDPRQQVKNPVMFVVYLGALITTILCFYPMGIPLWFNISITIFLWLTLLFANFAEAVAEGRGKAQADSLKQAKKEVMTYKINSLEDIKEENFIELQSSDLKRNDLVYVRAGEQIPADGDVIEGAASVDESAITGESAPVIRESGGDRSAVTGGTTVVSDYLVIRVTSENGQSFLDKMIAMVEGTQRKKTPNEIGLQIFLITLTIIFLTVSITLVPFTDFSSQLSGKGEALSLVIVIALLICLAPTTIGALISSIGIAGMSRLTKENVIAMSGRAIEAAGDVDVLLLDKTGTITLGNRRASDFLPVHGVSEEQLADAAQLSSLADETAEGRSIVILAKERFNLREREFQQSEVKFIDFSAKTRMSGIDYRGDVIRKGAADTMKKYVQSKGEDYPSECDKIVDKIARAGGTPLVVIKNNRVMGVVYLKDIVKNGVKEKFADMRKMGIKTIMITGDNPLTAAAIAAEAGVDDFLAEATPENKMNLIREYQEKGHLVAMTGDGTNDAPALAQADVAMAMNTGTQAAKEAGNMIDLDSSPTKLLQVVQIGKQLLMTRGALTTFSIANDIAKYFAVIPVLFYSIYPQLDRLNIMGLGSPLTAILSAVIYNAVVIVALIPLALKGVRYQEKPASQILSHNLLIYGLGGIIAPFIFIKIIDLILSLIIL.

A run of 4 helical transmembrane segments spans residues 24–44 (NPVM…CFYP), 45–65 (MGIP…TLLF), 212–232 (IFLI…VPFT), and 246–266 (SLVI…GALI). Asp302 serves as the catalytic 4-aspartylphosphate intermediate. ATP-binding positions include Asp339, Glu343, 372–379 (FSAKTRMS), and Lys390. Mg(2+)-binding residues include Asp513 and Asp517. 3 helical membrane passes run 573-593 (FSIA…FYSI), 611-631 (AILS…PLAL), and 656-676 (GIIA…LIIL).

This sequence belongs to the cation transport ATPase (P-type) (TC 3.A.3) family. Type IA subfamily. In terms of assembly, the system is composed of three essential subunits: KdpA, KdpB and KdpC.

The protein resides in the cell membrane. The catalysed reaction is K(+)(out) + ATP + H2O = K(+)(in) + ADP + phosphate + H(+). Functionally, part of the high-affinity ATP-driven potassium transport (or Kdp) system, which catalyzes the hydrolysis of ATP coupled with the electrogenic transport of potassium into the cytoplasm. This subunit is responsible for energy coupling to the transport system and for the release of the potassium ions to the cytoplasm. This is Potassium-transporting ATPase ATP-binding subunit from Enterococcus faecalis (strain ATCC 700802 / V583).